The following is a 528-amino-acid chain: GMP synthase [glutamine-hydrolyzing] (528 aa).

One can recognise a Glutamine amidotransferase type-1 domain in the interval 13 to 204 (AIVILDFGSQ…VYHICGCEPD (192 aa)). Residue Cys-90 is the Nucleophile of the active site. Residues His-178 and Glu-180 contribute to the active site. The GMPS ATP-PPase domain maps to 205 to 403 (WTTTAFIEEA…LGLPEEIVRR (199 aa)). 232 to 238 (SGGVDSS) is an ATP binding site.

As to quaternary structure, homodimer.

It carries out the reaction XMP + L-glutamine + ATP + H2O = GMP + L-glutamate + AMP + diphosphate + 2 H(+). It participates in purine metabolism; GMP biosynthesis; GMP from XMP (L-Gln route): step 1/1. In terms of biological role, catalyzes the synthesis of GMP from XMP. This chain is GMP synthase [glutamine-hydrolyzing], found in Prochlorococcus marinus (strain MIT 9303).